We begin with the raw amino-acid sequence, 148 residues long: MLMRTDPFRELDRFAEQVLGTSARPAVMPMDAWREGEEFVVEFDLPGIKADSLDIDIERNVVTVRAERPGVDPDREMLAAERPRGVFNRQLVLGENLDTERILASYQEGVLKLSIPVAERAKPRKISVDRGNNGHQTINKTAHEIIDA.

Residues 21–131 (TSARPAVMPM…KPRKISVDRG (111 aa)) enclose the sHSP domain.

Belongs to the small heat shock protein (HSP20) family.

Its function is as follows. Not known. This protein is one of the major immune reactive proteins in mycobacteria. This Mycobacterium leprae (strain TN) protein is 18 kDa antigen (hsp18).